The primary structure comprises 468 residues: Ubiquitin carboxyl-terminal hydrolase 17-like protein B (468 aa).

The disordered stretch occupies residues 1 to 20; that stretch reads MVVALSFPEADPAMSPPSAP. The region spanning 51 to 348 is the USP domain; sequence CGLQNTGNSC…NAYVLFYVQQ (298 aa). C60 functions as the Nucleophile in the catalytic mechanism. Catalysis depends on H307, which acts as the Proton acceptor. Positions 374–449 are disordered; it reads KKSGEKKHNK…GGQNLRNTEG (76 aa). Basic and acidic residues predominate over residues 394–403; it reads CENREKRSSK. Residues 422-434 show a composition bias toward polar residues; it reads GQKQENTKLTPQE.

Belongs to the peptidase C19 family. USP17 subfamily. Post-translationally, ubiquitinated. As to expression, detected in brain, heart, liver, lung, kidney, ovary and spleen.

The enzyme catalyses Thiol-dependent hydrolysis of ester, thioester, amide, peptide and isopeptide bonds formed by the C-terminal Gly of ubiquitin (a 76-residue protein attached to proteins as an intracellular targeting signal).. Its activity is regulated as follows. Inhibited by ubiquitin aldehyde. In terms of biological role, deubiquitinating enzyme that removes conjugated ubiquitin from specific proteins to regulate different cellular processes. The polypeptide is Ubiquitin carboxyl-terminal hydrolase 17-like protein B (Mus musculus (Mouse)).